Here is a 333-residue protein sequence, read N- to C-terminus: Uroporphyrinogen decarboxylase (333 aa).

Residues 22 to 26 (RQAGR), aspartate 71, tyrosine 145, serine 200, and histidine 310 contribute to the substrate site.

This sequence belongs to the uroporphyrinogen decarboxylase family. As to quaternary structure, homodimer.

Its subcellular location is the cytoplasm. It catalyses the reaction uroporphyrinogen III + 4 H(+) = coproporphyrinogen III + 4 CO2. The protein operates within porphyrin-containing compound metabolism; protoporphyrin-IX biosynthesis; coproporphyrinogen-III from 5-aminolevulinate: step 4/4. Catalyzes the decarboxylation of four acetate groups of uroporphyrinogen-III to yield coproporphyrinogen-III. In Thermoplasma acidophilum (strain ATCC 25905 / DSM 1728 / JCM 9062 / NBRC 15155 / AMRC-C165), this protein is Uroporphyrinogen decarboxylase.